A 787-amino-acid polypeptide reads, in one-letter code: Protocadherin beta-15 (787 aa).

The signal sequence occupies residues 1-26 (MEPAGERFPEQRQVLILLLLLEVTLA). Residues 27-690 (GWEPRRYSVM…AQADSLTVYL (664 aa)) lie on the Extracellular side of the membrane. 5 Cadherin domains span residues 35 to 133 (VMEE…SPEF), 138 to 242 (ITLK…APEF), 247 to 347 (YEVQ…FPEL), 352 to 451 (LTSP…APAF), and 456 to 561 (YTLF…SPFV). 2 N-linked (GlcNAc...) asparagine glycosylation sites follow: N418 and N436. N-linked (GlcNAc...) asparagine glycosylation occurs at N567. The region spanning 568–671 (GSAPCTELVP…LVDGFSQPYL (104 aa)) is the Cadherin 6 domain. The chain crosses the membrane as a helical span at residues 691 to 711 (VVALASVSSLFLFSVLLFVAV). At 712–787 (RLCRRSRAAS…DSRRKSEFLE (76 aa)) the chain is on the cytoplasmic side.

The protein localises to the cell membrane. In terms of biological role, potential calcium-dependent cell-adhesion protein. May be involved in the establishment and maintenance of specific neuronal connections in the brain. This Pan troglodytes (Chimpanzee) protein is Protocadherin beta-15 (PCDHB15).